The chain runs to 393 residues: S-adenosylmethionine synthase (393 aa).

His17 contributes to the ATP binding site. Asp19 contributes to the Mg(2+) binding site. Glu45 is a binding site for K(+). Residues Glu58 and Gln104 each contribute to the L-methionine site. Positions 104 to 114 (QSAEIAQGVEE) are flexible loop. Residues 171-173 (DAK), Asp245, 251-252 (RK), Ala268, and Lys272 each bind ATP. Residue Asp245 participates in L-methionine binding. Lys276 lines the L-methionine pocket.

Belongs to the AdoMet synthase family. Homotetramer; dimer of dimers. Requires Mg(2+) as cofactor. It depends on K(+) as a cofactor.

It is found in the cytoplasm. The catalysed reaction is L-methionine + ATP + H2O = S-adenosyl-L-methionine + phosphate + diphosphate. The protein operates within amino-acid biosynthesis; S-adenosyl-L-methionine biosynthesis; S-adenosyl-L-methionine from L-methionine: step 1/1. Catalyzes the formation of S-adenosylmethionine (AdoMet) from methionine and ATP. The overall synthetic reaction is composed of two sequential steps, AdoMet formation and the subsequent tripolyphosphate hydrolysis which occurs prior to release of AdoMet from the enzyme. This chain is S-adenosylmethionine synthase, found in Hyphomonas neptunium (strain ATCC 15444).